The primary structure comprises 132 residues: Small ribosomal subunit protein uS8 (132 aa).

This sequence belongs to the universal ribosomal protein uS8 family. As to quaternary structure, part of the 30S ribosomal subunit. Contacts proteins S5 and S12.

One of the primary rRNA binding proteins, it binds directly to 16S rRNA central domain where it helps coordinate assembly of the platform of the 30S subunit. The chain is Small ribosomal subunit protein uS8 from Syntrophobacter fumaroxidans (strain DSM 10017 / MPOB).